Here is an 88-residue protein sequence, read N- to C-terminus: Elongation factor 1-beta (88 aa).

It belongs to the EF-1-beta/EF-1-delta family.

In terms of biological role, promotes the exchange of GDP for GTP in EF-1-alpha/GDP, thus allowing the regeneration of EF-1-alpha/GTP that could then be used to form the ternary complex EF-1-alpha/GTP/AAtRNA. The protein is Elongation factor 1-beta (ef1b) of Archaeoglobus fulgidus (strain ATCC 49558 / DSM 4304 / JCM 9628 / NBRC 100126 / VC-16).